Here is a 647-residue protein sequence, read N- to C-terminus: Dihydrolipoyllysine-residue acetyltransferase component of pyruvate dehydrogenase complex (647 aa).

The N-terminal 86 residues, 1-86 (MWRVCARRAQ…LWGSPSRRWY (86 aa)), are a transit peptide targeting the mitochondrion. Residues 91–167 (HQKVPLPSLS…PVGAIICITV (77 aa)) enclose the Lipoyl-binding 1 domain. S100 bears the Phosphoserine mark. At K132 the chain carries N6-lipoyllysine. A disordered region spans residues 184 to 216 (SAAPAPPAAPAPTPAAPAPSPTPSAQAPGSSYP). Residues 187–205 (PAPPAAPAPTPAAPAPSPT) show a composition bias toward pro residues. Residues 218–294 (HMQVLLPALS…PLGTPLCIIV (77 aa)) form the Lipoyl-binding 2 domain. K259 carries the post-translational modification N6-lipoyllysine. The tract at residues 311–352 (VTDLKPPAPPPIPSPAAPVPPAPQPVAPPPSAPRPAAPAGPK) is disordered. Pro residues predominate over residues 316–348 (PPAPPPIPSPAAPVPPAPQPVAPPPSAPRPAAP). Residues 356 to 393 (FVSPLAKKLAAEKGIDLTQVKGTGPDGRIIKKDIDSFV) form the Peripheral subunit-binding (PSBD) domain. A CoA-binding site is contributed by R461. K466 is modified (N6-acetyllysine). Residue K473 is modified to N6-succinyllysine. S475 is a CoA binding site. K547 bears the N6-succinyllysine mark. CoA-binding residues include S566, N567, and G591. Active-site residues include H620 and D624.

Belongs to the 2-oxoacid dehydrogenase family. As to quaternary structure, part of the pyruvate dehydrogenase complex (PDHc) that is a multi-enzyme complex composed of multiple copies of three enzymes, pyruvate dehydrogenase (subunits PDH1A and PDHB, E1 component), dihydrolipoamide acetyltransferase (DLAT, E2 component), and dihydrolipoamide dehydrogenase (DLD, E3 component) to which is added an additional protein the E3-binding protein (PDHX, E3BP). In terms of structural architecture, the E2 and E3BP components assemble into a 60meric central core with icosahedral symmetry. The central core is decorated with E1 and E3 proteins. Currently, two alternative models for the E2:E3BP stoichiometry are considered as being either 48:12 (E2(48)-E3BP(12)) or 40:20 (E2(40)-E3BP(20)). Interacts with PDK2 and PDK3. Interacts with SIRT4. Interacts with PDHB. (R)-lipoate is required as a cofactor. Post-translationally, delipoylated at Lys-132 and Lys-259 by SIRT4, delipoylation decreases the PHD complex activity.

Its subcellular location is the mitochondrion matrix. It carries out the reaction N(6)-[(R)-dihydrolipoyl]-L-lysyl-[protein] + acetyl-CoA = N(6)-[(R)-S(8)-acetyldihydrolipoyl]-L-lysyl-[protein] + CoA. In terms of biological role, as part of the pyruvate dehydrogenase complex, catalyzes the transfers of an acetyl group to a lipoic acid moiety. The pyruvate dehydrogenase complex, catalyzes the overall conversion of pyruvate to acetyl-CoA and CO(2), and thereby links cytoplasmic glycolysis and the mitochondrial tricarboxylic acid (TCA) cycle. The sequence is that of Dihydrolipoyllysine-residue acetyltransferase component of pyruvate dehydrogenase complex from Bos taurus (Bovine).